The sequence spans 536 residues: Cytochrome P450 monooxygenase macC (536 aa).

A helical membrane pass occupies residues 2 to 22; the sequence is ALLYITTAALALLLLFLRAVF. Cys-448 contributes to the heme binding site.

It belongs to the cytochrome P450 family. Heme serves as cofactor.

The protein resides in the membrane. Its pathway is secondary metabolite biosynthesis; terpenoid biosynthesis. Functionally, cytochrome P450 monooxygenase; part of the gene cluster that mediates the biosynthesis of macrophorins, isoprenoid epoxycyclohexenones containing cyclized drimane moieties. The first step of the pathway is the synthesis of 6-methylsalicylic acid (6-MSA) by the polyketide synthase macA. 6-MSA is then converted to m-cresol by the decarboxylase macB. The cytochrome P450 monooxygenase macC then catalyzes the oxidation of m-cresol to toluquinol. Epoxidation of toluquinol is then performed by the short chain dehydrogenase macD, with the help of macE, and a further prenylation by macG leads to 7-deacetoxyyanuthone A. The next step is the hydroxylation of C-22 of 7-deacetoxyyanuthone A by the cytochrome P450 monooxygenase macH to yield 22-deacetylyanuthone A. O-Mevalon transferase macI then attaches mevalon to the hydroxyl group of 22-deacetylyanuthone A to produce yanuthone E. The terpene cyclase macJ catalyzes the cyclization of 22-deacetylyanuthone A to macrophorin A. MacJ is also able to catalyze cyclization of yanuthone E and 7-deacetoxyyanuthone A to their corresponding macrophorins. The macJ products can be further modified by macH and macJ, as well as by the FAD-dependent monooxygenase macF, to produce additional macrophorins, including 4'-oxomacrophorin A, 4'-oxomacrophorin D and 4'-oxomacrophorin E. The chain is Cytochrome P450 monooxygenase macC from Penicillium terrestre.